A 196-amino-acid chain; its full sequence is tRNA(Phe) 7-((3-amino-3-carboxypropyl)-4-demethylwyosine(37)-N(4))-methyltransferase 1 (196 aa).

It belongs to the TYW3 family.

The enzyme catalyses 4-demethyl-7-[(3S)-3-amino-3-carboxypropyl]wyosine(37) in tRNA(Phe) + S-adenosyl-L-methionine = 7-[(3S)-3-amino-3-carboxypropyl]wyosine(37) in tRNA(Phe) + S-adenosyl-L-homocysteine + H(+). In terms of biological role, S-adenosyl-L-methionine-dependent methyltransferase that acts as a component of the wyosine derivatives biosynthesis pathway. Probably methylates N-4 position of wybutosine-86 to produce wybutosine-72. This chain is tRNA(Phe) 7-((3-amino-3-carboxypropyl)-4-demethylwyosine(37)-N(4))-methyltransferase 1, found in Pyrococcus furiosus (strain ATCC 43587 / DSM 3638 / JCM 8422 / Vc1).